The chain runs to 456 residues: GTPase Der (456 aa).

EngA-type G domains lie at 4 to 169 (PVVA…PSKD) and 178 to 353 (VQLA…DQSR). Residues 10 to 17 (GRPNVGKS), 57 to 61 (DTGGL), 120 to 123 (NKCE), 184 to 191 (GRPNVGKS), 231 to 235 (DTAGI), and 296 to 299 (NKWD) contribute to the GTP site. In terms of domain architecture, KH-like spans 354–439 (RRVTTSVVNE…PIKLFWRGKQ (86 aa)).

It belongs to the TRAFAC class TrmE-Era-EngA-EngB-Septin-like GTPase superfamily. EngA (Der) GTPase family. As to quaternary structure, associates with the 50S ribosomal subunit.

Its function is as follows. GTPase that plays an essential role in the late steps of ribosome biogenesis. In Prochlorococcus marinus (strain NATL1A), this protein is GTPase Der.